A 45-amino-acid polypeptide reads, in one-letter code: Small, acid-soluble spore protein P (45 aa).

Positions 1–12 (MTERHTAKDIRK) are enriched in basic and acidic residues. A disordered region spans residues 1–45 (MTERHTAKDIRKNAPKGENPGQPEPLSGSKKVKKRNHVSQTNGEG).

The protein belongs to the SspP family.

The protein resides in the spore core. The protein is Small, acid-soluble spore protein P of Halalkalibacterium halodurans (strain ATCC BAA-125 / DSM 18197 / FERM 7344 / JCM 9153 / C-125) (Bacillus halodurans).